Consider the following 81-residue polypeptide: Styelin-E (81 aa).

Residues 1 to 22 (MQMKATILIVLVALFMIQQSEA) form the signal peptide. Tryptophan 24 bears the 6'-bromotryptophan mark. Arginine 26 is subject to 3,4-dihydroxyarginine. Lysine 27, lysine 30, and lysine 34 each carry 4,5-dihydroxylysine. 2 positions are modified to 3',4'-dihydroxyphenylalanine: tyrosine 36 and tyrosine 37. The residue at position 38 (lysine 38) is a 4,5-dihydroxylysine. At lysine 40 the chain carries 5-hydroxylysine. 3',4'-dihydroxyphenylalanine occurs at positions 41 and 42. At lysine 44 the chain carries 5-hydroxylysine. Leucine 54 carries the leucine amide modification. Positions 56 to 81 (DMTDEEFQDFMKEVEQAREEELQSRQ) are cleaved as a propeptide — removed in mature form.

Contains L-DOPA (3',4'-dihydroxyphenylalanine). Hemocytes and pharyngeal tissues.

It is found in the secreted. In terms of biological role, bactericidal against several Gram-positive and Gram-negative bacteria. This chain is Styelin-E, found in Styela clava (Sea squirt).